A 597-amino-acid polypeptide reads, in one-letter code: Peptidyl-prolyl cis-trans isomerase-like 2 (597 aa).

The 74-residue stretch at 41–114 (KKLPFNFCAA…TTDSDENKGD (74 aa)) folds into the U-box domain. One can recognise a PPIase cyclophilin-type domain in the interval 328 to 483 (NKGYVRMETN…NKIVIKDMII (156 aa)). Over residues 495 to 519 (KKQKEGEEERKREVARQGGTEDDRT) the composition is skewed to basic and acidic residues. Disordered stretches follow at residues 495–521 (KKQK…RTTW) and 560–597 (ATTT…FDGW).

The protein belongs to the cyclophilin-type PPIase family. PPIL2 subfamily.

It is found in the nucleus. It catalyses the reaction [protein]-peptidylproline (omega=180) = [protein]-peptidylproline (omega=0). The enzyme catalyses S-ubiquitinyl-[E2 ubiquitin-conjugating enzyme]-L-cysteine + [acceptor protein]-L-lysine = [E2 ubiquitin-conjugating enzyme]-L-cysteine + N(6)-ubiquitinyl-[acceptor protein]-L-lysine.. Its pathway is protein modification; protein ubiquitination. Functionally, may catalyze the cis-trans isomerization of proline imidic peptide bonds in oligopeptides thereby assisting the folding of proteins. May also function as a chaperone, playing a role in intracellular transport of proteins. May also have a protein ubiquitin ligase activity acting as an E3 ubiquitin protein ligase or as a ubiquitin-ubiquitin ligase promoting elongation of ubiquitin chains on proteins. This is Peptidyl-prolyl cis-trans isomerase-like 2 (ppi-2) from Neurospora crassa (strain ATCC 24698 / 74-OR23-1A / CBS 708.71 / DSM 1257 / FGSC 987).